The chain runs to 149 residues: Cell division protein SepF (149 aa).

The protein belongs to the SepF family. In terms of assembly, homodimer. Interacts with FtsZ.

The protein resides in the cytoplasm. Its function is as follows. Cell division protein that is part of the divisome complex and is recruited early to the Z-ring. Probably stimulates Z-ring formation, perhaps through the cross-linking of FtsZ protofilaments. Its function overlaps with FtsA. This chain is Cell division protein SepF, found in Clostridium perfringens (strain ATCC 13124 / DSM 756 / JCM 1290 / NCIMB 6125 / NCTC 8237 / Type A).